The sequence spans 102 residues: MIKSELVQRIAEHNPHLYQRDVENIVNAILEEIVAALARGDRVELRGFGAFSVKHRPARAGRNPRTGEHVPVEQKSVPFFKTGKEMRERLNRDNGISAETGA.

Belongs to the bacterial histone-like protein family. In terms of assembly, heterodimer of an alpha and a beta chain.

Functionally, this protein is one of the two subunits of integration host factor, a specific DNA-binding protein that functions in genetic recombination as well as in transcriptional and translational control. This chain is Integration host factor subunit beta, found in Rhodopseudomonas palustris (strain BisA53).